A 454-amino-acid chain; its full sequence is UPF0210 protein BAD_1323 (454 aa).

It belongs to the UPF0210 family. Homodimer.

The polypeptide is UPF0210 protein BAD_1323 (Bifidobacterium adolescentis (strain ATCC 15703 / DSM 20083 / NCTC 11814 / E194a)).